Here is a 288-residue protein sequence, read N- to C-terminus: Homoserine kinase (288 aa).

Position 78 to 88 (78 to 88 (PLARGLGSSSS)) interacts with ATP.

Belongs to the GHMP kinase family. Homoserine kinase subfamily.

It localises to the cytoplasm. It carries out the reaction L-homoserine + ATP = O-phospho-L-homoserine + ADP + H(+). It functions in the pathway amino-acid biosynthesis; L-threonine biosynthesis; L-threonine from L-aspartate: step 4/5. In terms of biological role, catalyzes the ATP-dependent phosphorylation of L-homoserine to L-homoserine phosphate. The protein is Homoserine kinase of Streptococcus agalactiae serotype V (strain ATCC BAA-611 / 2603 V/R).